The chain runs to 326 residues: Ras association domain-containing protein 2 (326 aa).

The disordered stretch occupies residues 111 to 133 (EVDAPPEGDQMPSSTDSRGLKPL). Positions 176-264 (YNHKTSVFTP…SKVFLMEKDQ (89 aa)) constitute a Ras-associating domain. Positions 272-319 (VAQYIKFEMPVLKSFIQKLQEEEDREVKKLMRKYTVLRLMIRQRLEEI) constitute an SARAH domain.

Interacts directly with activated KRAS in a GTP-dependent manner. Interacts (via SARAH domain) with STK3/MST2 and STK4/MST1. In terms of processing, phosphorylated by STK3/MST2 and STK4/MST1. Widely expressed with highest levels in brain, placenta, peripheral blood and lung. Frequently down-regulated in lung tumor cell lines.

It localises to the nucleus. Its subcellular location is the cytoplasm. The protein localises to the chromosome. It is found in the centromere. The protein resides in the kinetochore. Potential tumor suppressor. Acts as a KRAS-specific effector protein. May promote apoptosis and cell cycle arrest. Stabilizes STK3/MST2 by protecting it from proteasomal degradation. This chain is Ras association domain-containing protein 2 (RASSF2), found in Homo sapiens (Human).